The sequence spans 352 residues: C-glycoside deglycosidase alpha subunit (352 aa).

E147 provides a ligand contact to Mn(2+). H149 (proton acceptor) is an active-site residue. 3 residues coordinate Mn(2+): D179, H269, and E305.

It belongs to the C-glycoside deglycosidase alpha subunit family. In terms of assembly, heterodimer composed of an alpha subunit (CarB2) and a beta subunit (CarC2). The cofactor is a divalent metal cation.

It carries out the reaction 3''-dehydroorientin = 1,5-anhydro-D-erythro-hex-1-en-3-ulose + luteolin. With respect to regulation, activity is strongly reduced in the presence of chelating agents. Functionally, carbon-carbon bond-cleaving enzyme which participates in the metabolism of C-glycosides. Acts on the C8-glycosylated compound 3''-dehydroorientin (3''-oxo-orientin). This Arthrobacter globiformis (strain ATCC 8010 / DSM 20124 / JCM 1332 / NBRC 12137 / NCIMB 8907 / NRRL B-2979 / 168) protein is C-glycoside deglycosidase alpha subunit.